Here is a 257-residue protein sequence, read N- to C-terminus: Phycoerythrobilin:ferredoxin oxidoreductase (257 aa).

The protein belongs to the HY2 family.

It catalyses the reaction (3Z)-phycoerythrobilin + oxidized 2[4Fe-4S]-[ferredoxin] = 15,16-dihydrobiliverdin + reduced 2[4Fe-4S]-[ferredoxin] + 2 H(+). Its function is as follows. Catalyzes the two-electron reduction of the C2 and C3(1) diene system of 15,16-dihydrobiliverdin. This Synechococcus sp. (strain WH8020) protein is Phycoerythrobilin:ferredoxin oxidoreductase (pebB).